Here is a 256-residue protein sequence, read N- to C-terminus: Pimeloyl-[acyl-carrier protein] methyl ester esterase (256 aa).

In terms of domain architecture, AB hydrolase-1 spans 15 to 242; that stretch reads HLVLLHGWGL…AAHAPFISHP (228 aa). Substrate is bound by residues tryptophan 22, 82–83, and 143–147; these read SL and FLALQ. Serine 82 functions as the Nucleophile in the catalytic mechanism. Residues aspartate 207 and histidine 235 contribute to the active site. Histidine 235 contacts substrate.

Belongs to the AB hydrolase superfamily. Carboxylesterase BioH family. In terms of assembly, monomer.

It localises to the cytoplasm. The enzyme catalyses 6-carboxyhexanoyl-[ACP] methyl ester + H2O = 6-carboxyhexanoyl-[ACP] + methanol + H(+). The protein operates within cofactor biosynthesis; biotin biosynthesis. The physiological role of BioH is to remove the methyl group introduced by BioC when the pimeloyl moiety is complete. It allows to synthesize pimeloyl-ACP via the fatty acid synthetic pathway through the hydrolysis of the ester bonds of pimeloyl-ACP esters. This Escherichia coli O81 (strain ED1a) protein is Pimeloyl-[acyl-carrier protein] methyl ester esterase.